Consider the following 75-residue polypeptide: Small ribosomal subunit protein bS18c (75 aa).

Over residues Met-1 to Leu-12 the composition is skewed to basic residues. The segment at Met-1–Ile-21 is disordered.

The protein belongs to the bacterial ribosomal protein bS18 family. Part of the 30S ribosomal subunit.

It is found in the plastid. It localises to the chloroplast. This Cycas taitungensis (Prince sago) protein is Small ribosomal subunit protein bS18c.